The sequence spans 119 residues: Holo-[acyl-carrier-protein] synthase (119 aa).

Mg(2+) contacts are provided by Asp-8 and Glu-59.

This sequence belongs to the P-Pant transferase superfamily. AcpS family. Mg(2+) is required as a cofactor.

The protein localises to the cytoplasm. The enzyme catalyses apo-[ACP] + CoA = holo-[ACP] + adenosine 3',5'-bisphosphate + H(+). Functionally, transfers the 4'-phosphopantetheine moiety from coenzyme A to a Ser of acyl-carrier-protein. The protein is Holo-[acyl-carrier-protein] synthase of Staphylococcus aureus (strain JH1).